Consider the following 79-residue polypeptide: Protein GOLVEN 2 (79 aa).

A signal peptide spans 1–26 (MAIRVSHKSFLVALLLILFISSPTQA). The propeptide occupies 27–65 (RSLREVVRNRTLLVVEKSQESRKIRHEGGGSDVDGLMDM). Residues 49–79 (KIRHEGGGSDVDGLMDMDYNSANKKRPIHNR) form a disordered region. A Sulfotyrosine modification is found at Tyr-67. Residue Pro-75 is modified to Hydroxyproline.

This sequence belongs to the RGF family. In terms of assembly, binds to LRR receptor-like serine/threonine-protein kinases to trigger their dimerization with SERK proteins and subsequent signaling. As to expression, expressed in siliques, stems, hypocotyls, shoot apex, leaves, flowers and cotyledons, and, to a lower extent, in roots.

Its subcellular location is the secreted. The protein localises to the endoplasmic reticulum. In terms of biological role, signaling peptide (root growth factor) that regulates the pattern of root growth and lateral root development by modulating the length and the number of cortical cells in the root apical meristem (RAM), and the anticlinal asymmetric cell divisions in lateral root initiation cells. Also involved in the regulation of hypocotyl bending and root gravitropism, probably by influencing the formation of auxin gradients. Maintains the postembryonic root stem cell niche. The chain is Protein GOLVEN 2 from Arabidopsis thaliana (Mouse-ear cress).